The primary structure comprises 322 residues: Fructose-1,6-bisphosphatase class 1 1 (322 aa).

Residues E84, D103, L105, and D106 each contribute to the Mg(2+) site. Residues 106-109, N198, and K264 each bind substrate; that span reads DGSS. Mg(2+) is bound at residue E270.

The protein belongs to the FBPase class 1 family. As to quaternary structure, homotetramer. Mg(2+) is required as a cofactor.

Its subcellular location is the cytoplasm. It catalyses the reaction beta-D-fructose 1,6-bisphosphate + H2O = beta-D-fructose 6-phosphate + phosphate. It participates in carbohydrate biosynthesis; gluconeogenesis. The protein is Fructose-1,6-bisphosphatase class 1 1 of Pseudoalteromonas translucida (strain TAC 125).